The following is a 325-amino-acid chain: Diacylglycerol acyltransferase/mycolyltransferase Ag85B (325 aa).

Residues 1 to 40 (MTDVSRKIRAWGRRLMIGTAAAVVLPGLVGLAGGAATAGA) form the signal peptide. 82-83 (LR) contributes to the substrate binding site. Positions 98-108 (FEWYYQSGLSI) are fibronectin-binding. A disulfide bridge links cysteine 127 with cysteine 132. The substrate site is built by serine 166 and aspartate 194. Serine 166 serves as the catalytic Nucleophile. Residue glutamate 270 is part of the active site. Substrate is bound by residues 272–275 (FVRS), lysine 279, and 302–304 (HSW). Histidine 302 is a catalytic residue.

This sequence belongs to the mycobacterial A85 antigen family.

The protein resides in the secreted. It catalyses the reaction 2 alpha,alpha'-trehalose 6-mycolate = alpha,alpha'-trehalose 6,6'-bismycolate + alpha,alpha-trehalose. The enzyme catalyses an acyl-CoA + a 1,2-diacyl-sn-glycerol = a triacyl-sn-glycerol + CoA. Functionally, the antigen 85 proteins (FbpA, FbpB, FbpC) are responsible for the high affinity of mycobacteria for fibronectin, a large adhesive glycoprotein, which facilitates the attachment of Mycobacteria to murine alveolar macrophages (AMs). They also help to maintain the integrity of the cell wall by catalyzing the transfer of mycolic acids to cell wall arabinogalactan and through the synthesis of alpha,alpha-trehalose dimycolate (TDM, cord factor). They catalyze the transfer of a mycoloyl residue from one molecule of alpha,alpha-trehalose monomycolate (TMM) to another TMM, leading to the formation of TDM. This chain is Diacylglycerol acyltransferase/mycolyltransferase Ag85B (fbpB), found in Mycobacterium bovis (strain BCG / Pasteur 1173P2).